Here is a 309-residue protein sequence, read N- to C-terminus: Calcium homeostasis modulator protein 5 (309 aa).

At Met-1–Lys-15 the chain is on the cytoplasmic side. 3 residues coordinate a 1,2-diacyl-sn-glycero-3-phosphate: Lys-15, Arg-32, and Val-37. The helical transmembrane segment at Thr-16 to Val-37 threads the bilayer. The Extracellular segment spans residues Ala-38–Thr-45. 3 cysteine pairs are disulfide-bonded: Cys-41/Cys-127, Cys-43/Cys-158, and Cys-142/Cys-149. A helical transmembrane segment spans residues Glu-46–Asn-70. The Cytoplasmic portion of the chain corresponds to Asn-71–Val-99. The helical transmembrane segment at Leu-100–Met-129 threads the bilayer. Residues Gln-102 and Asn-121 each coordinate a 1,2-diacyl-sn-glycero-3-phosphate. Over Ser-130–Ser-174 the chain is Extracellular. The helical transmembrane segment at Leu-175–Tyr-200 threads the bilayer. The Cytoplasmic segment spans residues Ala-201–Met-309. A 1,2-diacyl-sn-glycero-3-phosphate is bound at residue Arg-202.

This sequence belongs to the CALHM family. As to quaternary structure, oligomerizes to form undecameric cone-shaped channels.

The protein resides in the membrane. Functionally, may assemble to form large pore channels with gating and ion conductance likely regulated by membrane lipids. The protein is Calcium homeostasis modulator protein 5 of Homo sapiens (Human).